Here is a 651-residue protein sequence, read N- to C-terminus: Apical membrane antigen 1-like protein (651 aa).

The first 41 residues, Met-1–Ala-41, serve as a signal peptide directing secretion. A propeptide spans Thr-42–Pro-81 (removed in mature form). Topologically, residues Thr-42–Thr-570 are extracellular. 7 cysteine pairs are disulfide-bonded: Cys-141-Cys-309, Cys-215-Cys-248, Cys-264-Cys-277, Cys-327-Cys-417, Cys-347-Cys-408, Cys-441-Cys-463, and Cys-453-Cys-475. N-linked (GlcNAc...) asparagine glycosylation occurs at Asn-230. Residues Pro-483 to Lys-486 form a 1; approximate repeat. The 12 x 4 AA approximate tandem-repeats of P-P-V-E stretch occupies residues Pro-483–Glu-531. A compositionally biased stretch (pro residues) spans Pro-483–Pro-547. The tract at residues Pro-483–Gly-567 is disordered. Tandem repeats lie at residues Pro-487–Glu-490, Pro-491–Glu-494, Pro-495–Glu-498, Pro-499–Glu-502, Pro-503–Glu-506, Pro-507–Glu-510, Pro-511–Glu-514, Pro-515–Glu-518, and Pro-519–Glu-522. Residues Pro-523–Glu-527 form an 11; approximate repeat. Residues Pro-528 to Glu-531 form a 12; approximate repeat. A helical membrane pass occupies residues Ala-571–Val-591. Residues Gly-592 to Phe-651 lie on the Cytoplasmic side of the membrane. Positions Arg-598 to Phe-651 are disordered.

Belongs to the apicomplexan parasites AMA1 family. In terms of processing, proteolytically cleaved within its transmembrane domain, releasing a soluble form from the cell surface.

Its subcellular location is the cell membrane. The protein localises to the secreted. Its function is as follows. May play a role in host cell invasion. The sequence is that of Apical membrane antigen 1-like protein from Toxoplasma gondii (strain ATCC 50861 / VEG).